Reading from the N-terminus, the 290-residue chain is Xyloglucan endotransglycosylase/hydrolase protein 8 (290 aa).

A signal peptide spans 1–25; it reads MAKHLALSVAAAVAVSWLAASSAAA. Positions 26–218 constitute a GH16 domain; the sequence is AGFYEKFDVV…WSGAPFVVSY (193 aa). Glu106 acts as the Nucleophile in catalysis. Catalysis depends on Glu110, which acts as the Proton donor. Glu110 provides a ligand contact to xyloglucan. Asn114 carries an N-linked (GlcNAc...) asparagine glycan. Xyloglucan is bound by residues 123–125, 133–135, and 197–198; these read NTN, KKE, and YW. 2 disulfides stabilise this stretch: Cys226-Cys240 and Cys273-Cys287. Position 278 (Arg278) interacts with xyloglucan.

This sequence belongs to the glycosyl hydrolase 16 family. XTH group 2 subfamily. In terms of processing, contains at least one intrachain disulfide bond essential for its enzymatic activity. As to expression, transcript strongly detected in leaf sheaths. Weakly or not expressed in leaf blades, roots and calli. Accumulation of transcript detected in shoot apex meristem, vascular tissues, young leaves, vascular bundles of leaf sheaths, and peripheral cylinder of the vascular bundles and fibers in the nodal region.

The protein localises to the secreted. It localises to the cell wall. The protein resides in the extracellular space. Its subcellular location is the apoplast. The catalysed reaction is breaks a beta-(1-&gt;4) bond in the backbone of a xyloglucan and transfers the xyloglucanyl segment on to O-4 of the non-reducing terminal glucose residue of an acceptor, which can be a xyloglucan or an oligosaccharide of xyloglucan.. Catalyzes xyloglucan endohydrolysis (XEH) and/or endotransglycosylation (XET). Cleaves and religates xyloglucan polymers, an essential constituent of the primary cell wall, and thereby participates in cell wall construction of growing tissues. May promote elongation of three internodes (II, III and IV) and may be involved in cell elongation processes. The chain is Xyloglucan endotransglycosylase/hydrolase protein 8 (XTH8) from Oryza sativa subsp. japonica (Rice).